The sequence spans 357 residues: MSLTRLLIKDFRNIENADLALSPGFNFLVGANGSGKTSVLEAIYTLGHGRAFRSLQVGRVIRHEQESFILHGRLQGSERETSIGLTKDKQGDSKVRIDGTDGHKVAELALLMPMQLITPEGFTLLNGGPKYRRAFLDWGCFHNEAGFFNAWSNLKRLLKQRNAALRQVTRYAQVRPWDMELVPLAEQISRWRAEYSAGIAEDMADTCKQFLPEFSLTFSFQRGWEKETDYAEVLERSFERDRMLTYTAHGPHKADFRIRADGAPVEDTLSRGQLKLLMCALRLAQGEFLTRESGRRCLYLIDDFASELDDARRGLLASRLKATQSQVFVSAISAEHVLDMSDKNSKMFTVEKGKITD.

30-37 contributes to the ATP binding site; that stretch reads GANGSGKT.

The protein belongs to the RecF family.

It is found in the cytoplasm. Its function is as follows. The RecF protein is involved in DNA metabolism; it is required for DNA replication and normal SOS inducibility. RecF binds preferentially to single-stranded, linear DNA. It also seems to bind ATP. The sequence is that of DNA replication and repair protein RecF from Enterobacter sp. (strain 638).